The following is a 156-amino-acid chain: Transcription antitermination protein NusB (156 aa).

It belongs to the NusB family.

Involved in transcription antitermination. Required for transcription of ribosomal RNA (rRNA) genes. Binds specifically to the boxA antiterminator sequence of the ribosomal RNA (rrn) operons. The protein is Transcription antitermination protein NusB of Rickettsia africae (strain ESF-5).